A 109-amino-acid chain; its full sequence is Latartoxin-2a (109 aa).

The first 19 residues, 1 to 19, serve as a signal peptide directing secretion; it reads MKVLVIIALCLVAFQSALS. Residues 20-37 constitute a propeptide, removed in mature form; sequence KKIENFESYIEDLKSEAR. The Processing quadruplet motif motif lies at 34-37; that stretch reads SEAR. 5 disulfide bridges follow: cysteine 39–cysteine 56, cysteine 46–cysteine 67, cysteine 55–cysteine 81, cysteine 69–cysteine 79, and cysteine 72–cysteine 93. The residue at position 108 (valine 108) is a Valine amide.

It belongs to the neurotoxin 19 (CSTX) family. 11 (latartoxin) subfamily. Contains 5 disulfide bonds. Post-translationally, cleavage of the propeptide depends on the processing quadruplet motif (XXXR, with at least one of X being E). As to expression, expressed by the venom gland.

The protein resides in the secreted. In terms of biological role, insect toxin. Causes paralysis in larvae of C.vicina by depolarizing membranes at the neuromuscular junction. The chain is Latartoxin-2a from Lachesana tarabaevi (Spider).